A 373-amino-acid polypeptide reads, in one-letter code: Chaperone protein DnaJ (373 aa).

One can recognise a J domain in the interval aspartate 4–glycine 68. The CR-type zinc finger occupies glycine 142 to threonine 224. The Zn(2+) site is built by cysteine 155, cysteine 158, cysteine 172, cysteine 175, cysteine 198, cysteine 201, cysteine 212, and cysteine 215. CXXCXGXG motif repeat units lie at residues cysteine 155 to glycine 162, cysteine 172 to glycine 179, cysteine 198 to glycine 205, and cysteine 212 to threonine 219.

It belongs to the DnaJ family. In terms of assembly, homodimer. Zn(2+) is required as a cofactor.

The protein localises to the cytoplasm. Participates actively in the response to hyperosmotic and heat shock by preventing the aggregation of stress-denatured proteins and by disaggregating proteins, also in an autonomous, DnaK-independent fashion. Unfolded proteins bind initially to DnaJ; upon interaction with the DnaJ-bound protein, DnaK hydrolyzes its bound ATP, resulting in the formation of a stable complex. GrpE releases ADP from DnaK; ATP binding to DnaK triggers the release of the substrate protein, thus completing the reaction cycle. Several rounds of ATP-dependent interactions between DnaJ, DnaK and GrpE are required for fully efficient folding. Also involved, together with DnaK and GrpE, in the DNA replication of plasmids through activation of initiation proteins. The sequence is that of Chaperone protein DnaJ from Mycoplasma mobile (strain ATCC 43663 / 163K / NCTC 11711) (Mesomycoplasma mobile).